Reading from the N-terminus, the 315-residue chain is tRNA dimethylallyltransferase (315 aa).

Residue 10-17 (GPTAVGKT) participates in ATP binding. Residue 12–17 (TAVGKT) participates in substrate binding. The interaction with substrate tRNA stretch occupies residues 35–38 (DSMQ).

Belongs to the IPP transferase family. In terms of assembly, monomer. The cofactor is Mg(2+).

It catalyses the reaction adenosine(37) in tRNA + dimethylallyl diphosphate = N(6)-dimethylallyladenosine(37) in tRNA + diphosphate. In terms of biological role, catalyzes the transfer of a dimethylallyl group onto the adenine at position 37 in tRNAs that read codons beginning with uridine, leading to the formation of N6-(dimethylallyl)adenosine (i(6)A). This is tRNA dimethylallyltransferase from Geobacillus kaustophilus (strain HTA426).